Reading from the N-terminus, the 143-residue chain is Ribonuclease P protein component 2 (143 aa).

This sequence belongs to the eukaryotic/archaeal RNase P protein component 2 family. As to quaternary structure, consists of a catalytic RNA component and at least 4-5 protein subunits.

The protein resides in the cytoplasm. The catalysed reaction is Endonucleolytic cleavage of RNA, removing 5'-extranucleotides from tRNA precursor.. Functionally, part of ribonuclease P, a protein complex that generates mature tRNA molecules by cleaving their 5'-ends. The chain is Ribonuclease P protein component 2 from Saccharolobus solfataricus (strain ATCC 35092 / DSM 1617 / JCM 11322 / P2) (Sulfolobus solfataricus).